The following is a 180-amino-acid chain: Adenine phosphoribosyltransferase (180 aa).

The protein belongs to the purine/pyrimidine phosphoribosyltransferase family. Homodimer.

It localises to the cytoplasm. The catalysed reaction is AMP + diphosphate = 5-phospho-alpha-D-ribose 1-diphosphate + adenine. The protein operates within purine metabolism; AMP biosynthesis via salvage pathway; AMP from adenine: step 1/1. Its function is as follows. Catalyzes a salvage reaction resulting in the formation of AMP, that is energically less costly than de novo synthesis. This chain is Adenine phosphoribosyltransferase, found in Haemophilus influenzae (strain PittEE).